The chain runs to 387 residues: EARP and GARP complex-interacting protein 1 (387 aa).

Position 1 is an N-acetylmethionine (Met-1). WD repeat units lie at residues 4–48 (DAPV…IIDF), 55–101 (INKN…VWRM), 124–164 (ELLC…LWDL), 172–214 (VLAS…GWDT), 219–258 (QIYC…FWDT), and 263–302 (EPVK…LSNM). Residues 310–335 (FGHLVDDDDISDQEDHRSEEKSKEPL) form a disordered region. A Phosphoserine modification is found at Ser-320. A compositionally biased stretch (basic and acidic residues) spans 322-335 (QEDHRSEEKSKEPL). One copy of the WD 7 repeat lies at 338 to 379 (NVIATYEEHEDSVYAVDWSSADPWLFASLSYDGRLVINRVPR).

This sequence belongs to the WD repeat EIPR1 family. In terms of assembly, interacts with two multisubunit tethering complexes: EARP composed of VPS50, VPS51, VPS52 and VPS53 subunits and GARP complex composed of VPS51, VPS52, VPS53 and VPS54 subunits. Interacts with SNAP29.

It is found in the golgi apparatus. The protein localises to the trans-Golgi network. Acts as a component of endosomal retrieval machinery that is involved in protein transport from early endosomes to either recycling endosomes or the trans-Golgi network. Mediates the recruitment of Golgi-associated retrograde protein (GARP) complex to the trans-Golgi network and controls early endosome-to-Golgi transport of internalized protein. Promotes the recycling of internalized transferrin receptor (TFRC) to the plasma membrane through interaction with endosome-associated recycling protein (EARP) complex. Controls proper insulin distribution and secretion, and retention of cargo in mature dense core vesicles. Required for the stability of the endosome-associated retrograde protein (EARP) complex subunits and for proper localization and association of EARP with membranes. This chain is EARP and GARP complex-interacting protein 1, found in Homo sapiens (Human).